Here is a 445-residue protein sequence, read N- to C-terminus: Methionine aminopeptidase 2-1 (445 aa).

Residues 1–99 (MAAQVPTEAL…FPNKAYPKGE (99 aa)) form a disordered region. Residues 61–75 (KKKKKRKPKKKKKHP) are compositionally biased toward basic residues. Histidine 198 contacts substrate. Aspartate 218, aspartate 229, and histidine 298 together coordinate a divalent metal cation. Position 306 (histidine 306) interacts with substrate. A divalent metal cation-binding residues include glutamate 331 and glutamate 426.

Belongs to the peptidase M24A family. Methionine aminopeptidase eukaryotic type 2 subfamily. Requires Co(2+) as cofactor. Zn(2+) serves as cofactor. The cofactor is Mn(2+). It depends on Fe(2+) as a cofactor.

It localises to the cytoplasm. The enzyme catalyses Release of N-terminal amino acids, preferentially methionine, from peptides and arylamides.. Its function is as follows. Cotranslationally removes the N-terminal methionine from nascent proteins. The N-terminal methionine is often cleaved when the second residue in the primary sequence is small and uncharged (Met-Ala-, Cys, Gly, Pro, Ser, Thr, or Val). In Fusarium vanettenii (strain ATCC MYA-4622 / CBS 123669 / FGSC 9596 / NRRL 45880 / 77-13-4) (Fusarium solani subsp. pisi), this protein is Methionine aminopeptidase 2-1.